The sequence spans 487 residues: Homoserine O-acetyltransferase (487 aa).

Residues 45 to 352 (NVILVCHPLT…PHGHDGFLLE (308 aa)) form the AB hydrolase-1 domain. S150 serves as the catalytic Nucleophile. R219 is a binding site for substrate. Catalysis depends on residues D313 and H346. A substrate-binding site is contributed by D347. CBS domains follow at residues 373 to 430 (MTNN…FQDL) and 434 to 487 (MTKD…EVLQ).

This sequence belongs to the AB hydrolase superfamily. MetX family. In terms of assembly, homodimer.

It is found in the cytoplasm. The catalysed reaction is L-homoserine + acetyl-CoA = O-acetyl-L-homoserine + CoA. It participates in amino-acid biosynthesis; L-methionine biosynthesis via de novo pathway; O-acetyl-L-homoserine from L-homoserine: step 1/1. Transfers an acetyl group from acetyl-CoA to L-homoserine, forming acetyl-L-homoserine. The sequence is that of Homoserine O-acetyltransferase from Methanocorpusculum labreanum (strain ATCC 43576 / DSM 4855 / Z).